The sequence spans 1812 residues: MSEILCHWLNQELKVSQTVSPKSFAKAFSSGYLIGEVLHKYELQDDFAEFSEKRISSAKLNNFSRLEPTLHLLGVQFDQNVAHDIITEKPGVAMKLLYQLYIALQRKKKSGLTGVELQTMQPLTNTKLQNMKSEAFRDRLRNLIPRQTDVSLMRVSHRFQEKYKYKDEDLVHTHLKKLENFQKLQEEQRSFNIEKQRLSRRRQNEIMAQIQAAIIQIPKPASNRTLKALDAQKMMKKKKEAEDVANEIKKFEALIKKDLQAKESASKTSLDAAGQTTTDLLNTYSDDEYIKKIQKRLEEDAFAREQREKRRRRLLMDQLIAHEAQEEAYREEQLVSRLMRQSQQERRIAVQLMHVRHEKEVLWQNRIFREKQYEERRLKDFQDALDREAALAKQAKIDYEEQALREKEMHEQIAAERVQARYKKHYSICAEILDQILDLSTKVADYRMLTNNLIPYKLMHDWKELFFNGMPIYEQASLKHLSAKPSTEQLIELEKRDLLDNNDYEEYKNMVGEWALPEEMVDNIPPSDNRILGHVIHRLIEHSLPPQVESTAPELPSFAIKGCLLGKTFSGKTTALKFLQKYFPIEVLSIDTLVQEAIQAFHNNEKVSGALQLQKAAEEKASPVRQESGDRSQNLHNVLSAEGTPETEDETRLSTKKTPKAEEVIASASLSELTTRAQLGAKSEKLLKKGKSISDTLLVSIVVNAINQIPIYKGWILDGFPMTLNQAKLLEEALTGFNRNLIELEGKKSQISTLAVDPTASREVPLPPSAFDFVMLLDISDNTSLNRMNDIMAEAFLSETPHENINQRVAAENQDMDEDQNLRDQIQHRIIGFWDHWPSLEQWFTEPENILIKMNAEVDEQSLCQKVKEMFMAEIMKKENKAKKKSEEKEAEKKEEFSLPEATPPTPPAPPPSEPEKEKEAHPPHERSKTPTAKGKPASEPPHGNRESPQEGKGKKSETSPKRKGSPRGKSPGGKAPVKKSPADSTDVSPVPAVPPPSKPGSEEWVFVNEPIPEEIPLFLVPYWKLIENSYINSIKTVLRHLREGQHTVLAYLYDTRTGFQQFLRRPDHKQNFVSQWQADFNSLPDDLWEDEETKAELHQRVNDLRDRLWDICDARKEEAEQERLDIINESWLQDSTGIAMNHFFSLMQAELNRFQDTKRLLQDYYRGMECKIPTDDTKRFTRIPLVQLDNKDTLEFQLRIPLVPRRSISPESALSKPKIKALLKGNIDYSLENVELNFEADEKVVMDTWQQASLAVSHMVAAEIHQRLMEEEKENQPADTKEKPPQAAANKKVKKEPPKKKREDKKGKGKSPPMAESAPVITVEEIAEMERKNELRLRIKEEHLAALQFEERATQFRLELIKTKALAFLEDLVTKAVDVYKLMEKWLGERYLNEMASVEKLTEVARYHIETSTKIQNELYLDQEDFFINGNIKVFPDPPPPVRPPPVEKEENGTLTIEQLDNLRDQFLDIAPKGVIGNKAFADILLDLVTLNLGTNNFPSSWMHLTQPELQELASLLVINSELVDWRKFLLVAALPWPIPLEEELLETLQRFKAVDEEQLGTVTFEQYLQAGLWFTGDKDIKIPANPLEPLPFNRQEHLIEFFFRLFADHDKDPPRLDYTEMLLYFACHPDGMEGVYRALSVATGSHVFQPIETPVLVAEKTSSFIDMSPTEEYPEPEDNFISEERELQEEGEEKEEDIPENANTEMISMETLLKVFRGGNEPQDTNRFASYPKTESIYSENFIKVFQDLGSKNLEPIEVAVLLKHPFIQDLIRSYPDYKIPDIKVVLQRSEHIQGSDGESSPSRLTEEKK.

The Calponin-homology (CH) domain maps to 1-105 (MSEILCHWLN…LLYQLYIALQ (105 aa)). 2 coiled-coil regions span residues 178–260 (LENF…KDLQ) and 374–403 (EERR…EEQA). The segment covering 618–630 (EEKASPVRQESGD) has biased composition (basic and acidic residues). Residues 618–658 (EEKASPVRQESGDRSQNLHNVLSAEGTPETEDETRLSTKKT) are disordered. Coiled-coil stretches lie at residues 724-750 (LNQA…KKSQ), 803-827 (ENIN…DQIQ), and 868-897 (KEMF…KEEF). Residues 879–897 (ENKAKKKSEEKEAEKKEEF) show a composition bias toward basic and acidic residues. Disordered regions lie at residues 879–1002 (ENKA…KPGS), 1272–1322 (EEKE…APVI), and 1793–1812 (EHIQ…EEKK). The segment covering 902-913 (ATPPTPPAPPPS) has biased composition (pro residues). 3 stretches are compositionally biased toward basic and acidic residues: residues 914 to 929 (EPEK…ERSK), 943 to 961 (HGNR…ETSP), and 1272 to 1285 (EEKE…KEKP). The span at 1292-1310 (KKVKKEPPKKKREDKKGKG) shows a compositional bias: basic residues. The tract at residues 1317–1669 (ESAPVITVEE…AEKTSSFIDM (353 aa)) is interaction with IFT20.

Interacts (via C-terminus) with IFT20. Interacts with DYNC1I2. In terms of tissue distribution, predominantly expressed in ciliated tissues. Mainly expressed in testis, followed by trachea. Also expressed at lower level in lung, kidney and liver.

It localises to the cell projection. Its subcellular location is the cilium. It is found in the flagellum. The protein resides in the cytoplasm. The protein localises to the golgi apparatus. In terms of biological role, required for correct axoneme development in spermatozoa. Important for normal development of the manchette and sperm head morphology. Essential for male fertility. Plays a role in localization of the intraflagellar transport protein IFT20 to the manchette, suggesting function as an adapter for dynein-mediated protein transport during spermatogenesis. Also plays a role in bone growth where it seems to be required for normal osteoblast differentiation. This chain is Sperm flagellar protein 2 (SPEF2), found in Sus scrofa (Pig).